The following is a 202-amino-acid chain: Large ribosomal subunit protein mL40 (202 aa).

The interval 42 to 79 (IQHQQTASYASKGKSGPPAGMFSGQKAGSKKSKGPKQV) is disordered.

It belongs to the mitochondrion-specific ribosomal protein mL40 family. Component of the mitochondrial large ribosomal subunit (mt-LSU). Mature N.crassa 74S mitochondrial ribosomes consist of a small (37S) and a large (54S) subunit. The 37S small subunit contains a 16S ribosomal RNA (16S mt-rRNA) and 32 different proteins. The 54S large subunit contains a 23S rRNA (23S mt-rRNA) and 42 different proteins. mL40 is binding to NAD.

The protein localises to the mitochondrion. Its function is as follows. Component of the mitochondrial ribosome (mitoribosome), a dedicated translation machinery responsible for the synthesis of mitochondrial genome-encoded proteins, including at least some of the essential transmembrane subunits of the mitochondrial respiratory chain. The mitoribosomes are attached to the mitochondrial inner membrane and translation products are cotranslationally integrated into the membrane. In Neurospora crassa (strain ATCC 24698 / 74-OR23-1A / CBS 708.71 / DSM 1257 / FGSC 987), this protein is Large ribosomal subunit protein mL40 (mrpl28).